The chain runs to 938 residues: Nitrate reductase (938 aa).

Residues Met1–Asn64 form the 4Fe-4S Mo/W bis-MGD-type domain. [4Fe-4S] cluster-binding residues include Cys8, Cys11, Cys15, and Cys50.

The protein belongs to the prokaryotic molybdopterin-containing oxidoreductase family. NasA/NapA/NarB subfamily. Requires [4Fe-4S] cluster as cofactor. Mo-bis(molybdopterin guanine dinucleotide) serves as cofactor.

Its subcellular location is the cytoplasm. The enzyme catalyses nitrate + a quinol = a quinone + nitrite + H2O. Its pathway is nitrogen metabolism; nitrate reduction (assimilation). Nitrate reductase is a key enzyme involved in the first step of nitrate assimilation in plants, fungi and bacteria. This chain is Nitrate reductase, found in Shewanella frigidimarina (strain NCIMB 400).